A 239-amino-acid chain; its full sequence is Pyridoxine 5'-phosphate synthase (239 aa).

N9 provides a ligand contact to 3-amino-2-oxopropyl phosphate. Residue 11–12 coordinates 1-deoxy-D-xylulose 5-phosphate; sequence DH. R20 provides a ligand contact to 3-amino-2-oxopropyl phosphate. The Proton acceptor role is filled by H45. Positions 47 and 52 each coordinate 1-deoxy-D-xylulose 5-phosphate. Catalysis depends on E72, which acts as the Proton acceptor. T102 is a binding site for 1-deoxy-D-xylulose 5-phosphate. The active-site Proton donor is the H189. 3-amino-2-oxopropyl phosphate is bound by residues G190 and 211–212; that span reads GH.

The protein belongs to the PNP synthase family. In terms of assembly, homooctamer; tetramer of dimers.

The protein resides in the cytoplasm. The enzyme catalyses 3-amino-2-oxopropyl phosphate + 1-deoxy-D-xylulose 5-phosphate = pyridoxine 5'-phosphate + phosphate + 2 H2O + H(+). Its pathway is cofactor biosynthesis; pyridoxine 5'-phosphate biosynthesis; pyridoxine 5'-phosphate from D-erythrose 4-phosphate: step 5/5. Functionally, catalyzes the complicated ring closure reaction between the two acyclic compounds 1-deoxy-D-xylulose-5-phosphate (DXP) and 3-amino-2-oxopropyl phosphate (1-amino-acetone-3-phosphate or AAP) to form pyridoxine 5'-phosphate (PNP) and inorganic phosphate. The polypeptide is Pyridoxine 5'-phosphate synthase (Ehrlichia chaffeensis (strain ATCC CRL-10679 / Arkansas)).